A 459-amino-acid chain; its full sequence is Ribulose bisphosphate carboxylase large chain (459 aa).

At Lys-4 the chain carries N6,N6,N6-trimethyllysine. Residues Asn-113 and Thr-163 each coordinate substrate. The active-site Proton acceptor is the Lys-165. Lys-167 provides a ligand contact to substrate. Mg(2+) contacts are provided by Lys-191, Asp-193, and Glu-194. At Lys-191 the chain carries N6-carboxylysine. His-284 serves as the catalytic Proton acceptor. Residues Arg-285, His-317, and Ser-369 each contribute to the substrate site.

It belongs to the RuBisCO large chain family. Type I subfamily. In terms of assembly, heterohexadecamer of 8 large chains and 8 small chains; disulfide-linked. The disulfide link is formed within the large subunit homodimers. Mg(2+) serves as cofactor. Post-translationally, the disulfide bond which can form in the large chain dimeric partners within the hexadecamer appears to be associated with oxidative stress and protein turnover.

The protein localises to the plastid. It localises to the chloroplast. It carries out the reaction 2 (2R)-3-phosphoglycerate + 2 H(+) = D-ribulose 1,5-bisphosphate + CO2 + H2O. It catalyses the reaction D-ribulose 1,5-bisphosphate + O2 = 2-phosphoglycolate + (2R)-3-phosphoglycerate + 2 H(+). In terms of biological role, ruBisCO catalyzes two reactions: the carboxylation of D-ribulose 1,5-bisphosphate, the primary event in carbon dioxide fixation, as well as the oxidative fragmentation of the pentose substrate in the photorespiration process. Both reactions occur simultaneously and in competition at the same active site. This chain is Ribulose bisphosphate carboxylase large chain, found in Micranthes integrifolia (Wholeleaf saxifrage).